The sequence spans 545 residues: Glucose-6-phosphate isomerase (545 aa).

Glu-351 acts as the Proton donor in catalysis. Active-site residues include His-382 and Lys-510.

This sequence belongs to the GPI family.

It localises to the cytoplasm. It catalyses the reaction alpha-D-glucose 6-phosphate = beta-D-fructose 6-phosphate. Its pathway is carbohydrate biosynthesis; gluconeogenesis. It functions in the pathway carbohydrate degradation; glycolysis; D-glyceraldehyde 3-phosphate and glycerone phosphate from D-glucose: step 2/4. Functionally, catalyzes the reversible isomerization of glucose-6-phosphate to fructose-6-phosphate. The chain is Glucose-6-phosphate isomerase from Shewanella pealeana (strain ATCC 700345 / ANG-SQ1).